The chain runs to 416 residues: Glutamyl-tRNA reductase (416 aa).

Substrate-binding positions include 49–52, Ser105, 110–112, and Gln116; these read TCNR and EPQ. Cys50 acts as the Nucleophile in catalysis. Position 185–190 (185–190) interacts with NADP(+); the sequence is GAGETI.

This sequence belongs to the glutamyl-tRNA reductase family. Homodimer.

It catalyses the reaction (S)-4-amino-5-oxopentanoate + tRNA(Glu) + NADP(+) = L-glutamyl-tRNA(Glu) + NADPH + H(+). It participates in porphyrin-containing compound metabolism; protoporphyrin-IX biosynthesis; 5-aminolevulinate from L-glutamyl-tRNA(Glu): step 1/2. In terms of biological role, catalyzes the NADPH-dependent reduction of glutamyl-tRNA(Glu) to glutamate 1-semialdehyde (GSA). The protein is Glutamyl-tRNA reductase of Shewanella baltica (strain OS223).